The sequence spans 805 residues: Zinc finger CCCH domain-containing protein 11B (805 aa).

2 C3H1-type zinc fingers span residues 2–29 (PNQG…HCEA) and 31–57 (LGNE…HMEI). 6 disordered regions span residues 140–194 (KVES…GLRV), 223–351 (KKMK…DKVN), 364–433 (MLLE…TCIK), 449–468 (IVAS…SMQE), 481–506 (KALR…PGAR), and 715–805 (VTVP…PLEL). Over residues 160–175 (ADDDEDDDDQFSEEGD) the composition is skewed to acidic residues. Basic and acidic residues predominate over residues 364–390 (MLLERASQKHGESQTKLKTEGPSKTDD). Residues 391 to 402 (STSGARSSSTIR) are compositionally biased toward polar residues. A coiled-coil region spans residues 403-423 (IKTFSEVLAEEEHRQQEAERQ). Composition is skewed to basic and acidic residues over residues 412 to 433 (EEEH…TCIK) and 455 to 468 (QSEE…SMQE). 2 stretches are compositionally biased toward low complexity: residues 486-498 (QQSS…SPSQ) and 730-749 (PPTQ…PSSS). Positions 750 to 763 (QMSMKTRRLSSAST) are enriched in polar residues. The segment covering 789 to 805 (EIDLDPGKDEDDLPLEL) has biased composition (acidic residues).

In terms of biological role, may play a role in mRNA transport. This chain is Zinc finger CCCH domain-containing protein 11B, found in Homo sapiens (Human).